The sequence spans 186 residues: Adenylate kinase (186 aa).

Residue 10–15 (GVGKGT) participates in ATP binding. The segment at 30 to 59 (STGDIFRYNIKNKTELGLEAMSYTDKGELV) is NMP. AMP contacts are provided by residues threonine 31, arginine 36, 57 to 59 (ELV), 85 to 88 (GYPR), and glutamine 92. Residues 126–136 (KRAAEQGRADD) are LID. Arginine 127 is an ATP binding site. The AMP site is built by arginine 133 and arginine 144. Position 172 (glycine 172) interacts with ATP.

It belongs to the adenylate kinase family. In terms of assembly, monomer.

Its subcellular location is the cytoplasm. It catalyses the reaction AMP + ATP = 2 ADP. The protein operates within purine metabolism; AMP biosynthesis via salvage pathway; AMP from ADP: step 1/1. Functionally, catalyzes the reversible transfer of the terminal phosphate group between ATP and AMP. Plays an important role in cellular energy homeostasis and in adenine nucleotide metabolism. The chain is Adenylate kinase from Bifidobacterium longum (strain NCC 2705).